Here is a 185-residue protein sequence, read N- to C-terminus: Ribosome hibernation promotion factor (185 aa).

The segment at 1 to 125 (MIKFNIRGEN…PLDTTDEVAE (125 aa)) is probably still associates with ribosome. Residues 126 to 185 (DHVDIVRTKHVALKPMDAEEAVLQMDMLGHDFYVFTDADSNGTHVVYRRTDGRYGLIETE) form a required but not sufficient to restore ribosome dimerization, in vitro will replace E.coli RMF in ribosome dimerization region.

This sequence belongs to the HPF/YfiA ribosome-associated protein family. Long HPF subfamily. Interacts with 100S ribosomes in stationary phase; alters the relative position of the 30S and 50S subunits.

Its subcellular location is the cytoplasm. Required for dimerization of active 70S ribosomes into 100S ribosomes in stationary phase; 100S ribosomes are translationally inactive and sometimes present during exponential growth. Able to dimerize E.coli 70S ribosomes in vitro. The chain is Ribosome hibernation promotion factor from Lactococcus lactis subsp. cremoris (strain MG1363).